A 139-amino-acid chain; its full sequence is Transcription antitermination protein NusB (139 aa).

This sequence belongs to the NusB family.

In terms of biological role, involved in transcription antitermination. Required for transcription of ribosomal RNA (rRNA) genes. Binds specifically to the boxA antiterminator sequence of the ribosomal RNA (rrn) operons. The sequence is that of Transcription antitermination protein NusB from Lactiplantibacillus plantarum (strain ATCC BAA-793 / NCIMB 8826 / WCFS1) (Lactobacillus plantarum).